A 504-amino-acid chain; its full sequence is Transcription factor NDT80 (504 aa).

Disordered stretches follow at residues 64-172 (MHFN…QHHM), 283-310 (NGFP…NQHA), and 477-504 (RGRS…TPPQ). Composition is skewed to low complexity over residues 73–87 (QQQQ…QQQQ), 103–145 (QGPT…ARQP), 153–172 (QQAQ…QHHM), and 292–301 (HPQNQPQNHP). The segment at residues 160–488 (QADAQSQAQQ…RSPSSYHKDR (329 aa)) is a DNA-binding region (NDT80).

It localises to the nucleus. Its function is as follows. Meiosis-specific transcription factor that binds to the middle sporulation element (MSE) of targeted genes corresponding to the consensus sequence 5'-ACACAAA-3'. Acts as an activator of CDR1 induction by antifungal drugs. Modulates azole sensitivity by controlling the expression of ergosterol biosynthesis genes. Required for hyphal growth in response to different filament-inducing cues and for the proper expression of genes characterizing the filamentous transcriptional program including noteworthy genes encoding cell wall components, such as HWP1, ECE1, RBT4, and ALS3. Is essential for the completion of cell separation through the direct transcriptional regulation of genes encoding the chitinase CHT3 and the cell wall glucosidase SUN41. Required for biofilm formation and plays a key role in microcolony formation under both flow and static conditions and to epithelial surfaces. Essential for virulence. The polypeptide is Transcription factor NDT80 (Candida albicans (strain SC5314 / ATCC MYA-2876) (Yeast)).